Reading from the N-terminus, the 517-residue chain is Ribonuclease Y (517 aa).

A helical membrane pass occupies residues 1 to 21; the sequence is MIEVLIGLGAGVAGVGAGYLY. The KH domain maps to 207–273; it reads LINVVNIKND…TRVIELLVED (67 aa). Residues 333–426 enclose the HD domain; sequence ALAHSLEVAH…VCAADCLSAA (94 aa).

Belongs to the RNase Y family.

Its subcellular location is the cell membrane. Functionally, endoribonuclease that initiates mRNA decay. The protein is Ribonuclease Y of Campylobacter curvus (strain 525.92).